The following is a 450-amino-acid chain: Bifunctional protein GlmU (450 aa).

The interval 1 to 228 (MKTALVILAA…ESETLGINSR (228 aa)) is pyrophosphorylase. Residues 8–11 (LAAG), lysine 22, glutamine 75, and 80–81 (GT) each bind UDP-N-acetyl-alpha-D-glucosamine. Residue aspartate 105 participates in Mg(2+) binding. UDP-N-acetyl-alpha-D-glucosamine-binding residues include glycine 140, glutamate 154, asparagine 169, and asparagine 226. Asparagine 226 is a Mg(2+) binding site. The linker stretch occupies residues 229–249 (TELSAAEAAFQERARTNAFEN). The tract at residues 250–450 (GVTLPAPGTV…AKKAKQQRGS (201 aa)) is N-acetyltransferase. Positions 315 and 333 each coordinate UDP-N-acetyl-alpha-D-glucosamine. Residue histidine 345 is the Proton acceptor of the active site. UDP-N-acetyl-alpha-D-glucosamine is bound by residues tyrosine 348 and asparagine 359. Acetyl-CoA is bound by residues alanine 362, 368–369 (NY), serine 387, serine 405, and arginine 422.

It in the N-terminal section; belongs to the N-acetylglucosamine-1-phosphate uridyltransferase family. The protein in the C-terminal section; belongs to the transferase hexapeptide repeat family. Homotrimer. The cofactor is Mg(2+).

The protein localises to the cytoplasm. The enzyme catalyses alpha-D-glucosamine 1-phosphate + acetyl-CoA = N-acetyl-alpha-D-glucosamine 1-phosphate + CoA + H(+). It carries out the reaction N-acetyl-alpha-D-glucosamine 1-phosphate + UTP + H(+) = UDP-N-acetyl-alpha-D-glucosamine + diphosphate. It participates in nucleotide-sugar biosynthesis; UDP-N-acetyl-alpha-D-glucosamine biosynthesis; N-acetyl-alpha-D-glucosamine 1-phosphate from alpha-D-glucosamine 6-phosphate (route II): step 2/2. Its pathway is nucleotide-sugar biosynthesis; UDP-N-acetyl-alpha-D-glucosamine biosynthesis; UDP-N-acetyl-alpha-D-glucosamine from N-acetyl-alpha-D-glucosamine 1-phosphate: step 1/1. The protein operates within bacterial outer membrane biogenesis; LPS lipid A biosynthesis. In terms of biological role, catalyzes the last two sequential reactions in the de novo biosynthetic pathway for UDP-N-acetylglucosamine (UDP-GlcNAc). The C-terminal domain catalyzes the transfer of acetyl group from acetyl coenzyme A to glucosamine-1-phosphate (GlcN-1-P) to produce N-acetylglucosamine-1-phosphate (GlcNAc-1-P), which is converted into UDP-GlcNAc by the transfer of uridine 5-monophosphate (from uridine 5-triphosphate), a reaction catalyzed by the N-terminal domain. The chain is Bifunctional protein GlmU from Roseobacter denitrificans (strain ATCC 33942 / OCh 114) (Erythrobacter sp. (strain OCh 114)).